The following is a 393-amino-acid chain: Thermostable carboxypeptidase 1 (393 aa).

3 residues coordinate Zn(2+): H104, D109, and H245. Y302 acts as the Proton donor in catalysis. E373 (nucleophile) is an active-site residue.

The protein belongs to the peptidase M20 family. Homotetramer. It depends on Zn(2+) as a cofactor.

Can release basic, acidic, aromatic, and, to a lesser extent, aliphatic amino acids. This is Thermostable carboxypeptidase 1 (cpsA1) from Saccharolobus solfataricus (strain ATCC 35092 / DSM 1617 / JCM 11322 / P2) (Sulfolobus solfataricus).